Consider the following 221-residue polypeptide: tRNA (guanine-N(7)-)-methyltransferase (221 aa).

S-adenosyl-L-methionine-binding residues include Glu-51, Glu-76, Asp-103, and Asp-125. Asp-125 is a catalytic residue. Substrate is bound by residues Lys-129 and Asp-161.

The protein belongs to the class I-like SAM-binding methyltransferase superfamily. TrmB family.

It carries out the reaction guanosine(46) in tRNA + S-adenosyl-L-methionine = N(7)-methylguanosine(46) in tRNA + S-adenosyl-L-homocysteine. It functions in the pathway tRNA modification; N(7)-methylguanine-tRNA biosynthesis. In terms of biological role, catalyzes the formation of N(7)-methylguanine at position 46 (m7G46) in tRNA. In Wolbachia pipientis wMel, this protein is tRNA (guanine-N(7)-)-methyltransferase.